A 259-amino-acid polypeptide reads, in one-letter code: MAFKIWQIGLHLQQQEAVAVAIVRGAKECFLQRWWRLPLENDIIKDGRIVDAQQLAKTLLPWSRELPQRHHIMLAFPASRTLQRSFPRPSMSLGEREQTAWLSGTMARELDMDPDSLRFDYSEDSLSPAYNVTAAQSKELATLLTLAERLRVHVSAITPDASALQRFLPFLPSHQQCLAWRDNEQWLWATRYSWGRKLAVGMTSAKELAAALSVDPESVAICGEGGFDPWEAVSVRQPPLPPPGGDFAIALGLALGKAY.

In terms of biological role, required for the use of extracellular DNA as a nutrient. This is DNA utilization protein HofM (hofM) from Escherichia coli (strain K12).